The chain runs to 127 residues: MARVKRAVNAHKKRRAILEAASGYRGQRSRLYRKAKEQVTHSLVYNYNDRKKRKGDFRQLWIQRINAAARANGMTYNRLIQGLKAANIEVDRKILAELAVNDAGAFAALVEVAQKALPSDVNAPKAA.

The protein belongs to the bacterial ribosomal protein bL20 family.

Binds directly to 23S ribosomal RNA and is necessary for the in vitro assembly process of the 50S ribosomal subunit. It is not involved in the protein synthesizing functions of that subunit. This Streptomyces avermitilis (strain ATCC 31267 / DSM 46492 / JCM 5070 / NBRC 14893 / NCIMB 12804 / NRRL 8165 / MA-4680) protein is Large ribosomal subunit protein bL20.